Reading from the N-terminus, the 281-residue chain is Transcription factor E2F6 (281 aa).

Residue Lys9 forms a Glycyl lysine isopeptide (Lys-Gly) (interchain with G-Cter in SUMO2) linkage. A DNA-binding region spans residues 50-129 (YVSMRKALKV…SKNHIRWIGS (80 aa)). The short motif at 95 to 129 (KLGVRKRRVYDITNVLDGIDLVEKKSKNHIRWIGS) is the DEF box element. The interval 130 to 222 (DLSNFGAVPQ…PAPREDSITV (93 aa)) is dimerization. Residues 143–164 (LQEELSDLSAMEDALDELIKDC) are leucine-zipper. Residues 173-281 (DDKENERLAY…QSEELLEVSN (109 aa)) are transcription repression. The segment at 241–281 (GQTSNKRSEGVGTSSSESTHPEGPEEEENPQQSEELLEVSN) is disordered.

The protein belongs to the E2F/DP family. As to quaternary structure, forms heterodimers with DP family members TFDP1 or TFDP2. Component of the DRTF1/E2F transcription factor complex. Part of the E2F6.com-1 complex in G0 phase composed of E2F6, MGA, MAX, TFDP1, CBX3, BAT8, EUHMTASE1, RING1, RNF2, MBLR, L3MBTL2 and YAF2. Component of some MLL1/MLL complex, at least composed of the core components KMT2A/MLL1, ASH2L, HCFC1/HCF1, WDR5 and RBBP5, as well as the facultative components BACC1, CHD8, E2F6, HSP70, INO80C, KANSL1, LAS1L, MAX, MCRS1, MGA, KAT8/MOF, PELP1, PHF20, PRP31, RING2, RUVB1/TIP49A, RUVB2/TIP49B, SENP3, TAF1, TAF4, TAF6, TAF7, TAF9 and TEX10. In terms of tissue distribution, expressed in all tissues examined. Highest levels in placenta, skeletal muscle, heart, ovary, kidney, small intestine and spleen.

Its subcellular location is the nucleus. Inhibitor of E2F-dependent transcription. Binds DNA cooperatively with DP proteins through the E2 recognition site, 5'-TTTC[CG]CGC-3'. Has a preference for the 5'-TTTCCCGC-3' E2F recognition site. E2F6 lacks the transcriptional activation and pocket protein binding domains. Appears to regulate a subset of E2F-dependent genes whose products are required for entry into the cell cycle but not for normal cell cycle progression. Represses expression of some meiosis-specific genes, including SLC25A31/ANT4. May silence expression via the recruitment of a chromatin remodeling complex containing histone H3-K9 methyltransferase activity. Overexpression delays the exit of cells from the S-phase. In Homo sapiens (Human), this protein is Transcription factor E2F6.